Consider the following 228-residue polypeptide: Phosphoribosylformylglycinamidine synthase subunit PurQ (228 aa).

The Glutamine amidotransferase type-1 domain occupies K2–R225. C86 (nucleophile) is an active-site residue. Residues H194 and E196 contribute to the active site.

Part of the FGAM synthase complex composed of 1 PurL, 1 PurQ and 2 PurS subunits.

It is found in the cytoplasm. It catalyses the reaction N(2)-formyl-N(1)-(5-phospho-beta-D-ribosyl)glycinamide + L-glutamine + ATP + H2O = 2-formamido-N(1)-(5-O-phospho-beta-D-ribosyl)acetamidine + L-glutamate + ADP + phosphate + H(+). The catalysed reaction is L-glutamine + H2O = L-glutamate + NH4(+). It functions in the pathway purine metabolism; IMP biosynthesis via de novo pathway; 5-amino-1-(5-phospho-D-ribosyl)imidazole from N(2)-formyl-N(1)-(5-phospho-D-ribosyl)glycinamide: step 1/2. Functionally, part of the phosphoribosylformylglycinamidine synthase complex involved in the purines biosynthetic pathway. Catalyzes the ATP-dependent conversion of formylglycinamide ribonucleotide (FGAR) and glutamine to yield formylglycinamidine ribonucleotide (FGAM) and glutamate. The FGAM synthase complex is composed of three subunits. PurQ produces an ammonia molecule by converting glutamine to glutamate. PurL transfers the ammonia molecule to FGAR to form FGAM in an ATP-dependent manner. PurS interacts with PurQ and PurL and is thought to assist in the transfer of the ammonia molecule from PurQ to PurL. This Lacticaseibacillus casei (strain BL23) (Lactobacillus casei) protein is Phosphoribosylformylglycinamidine synthase subunit PurQ.